The sequence spans 250 residues: tRNA (guanine-N(1)-)-methyltransferase (250 aa).

Residues Gly116 and 136-141 (IGDYVL) contribute to the S-adenosyl-L-methionine site.

Belongs to the RNA methyltransferase TrmD family. Homodimer.

It is found in the cytoplasm. It carries out the reaction guanosine(37) in tRNA + S-adenosyl-L-methionine = N(1)-methylguanosine(37) in tRNA + S-adenosyl-L-homocysteine + H(+). In terms of biological role, specifically methylates guanosine-37 in various tRNAs. The protein is tRNA (guanine-N(1)-)-methyltransferase of Pseudomonas putida (strain GB-1).